We begin with the raw amino-acid sequence, 503 residues long: Transforming protein rel polyprotein (503 aa).

The RHD domain maps to 16–305 (PYIEIFEQPR…GNKAKRQRST (290 aa)). Ser-275 is modified (phosphoserine; by host PKA). 2 disordered regions span residues 286-306 (RYLPDEEDPSGNKAKRQRSTL) and 318-342 (AVTERPKAAPIPTVNPEGKLKKEPN). The Nuclear localization signal signature appears at 298-303 (KAKRQR).

It is found in the host cytoplasm. In terms of biological role, this transforming protein appears to have a protein-kinase activity. The sequence is that of Transforming protein rel polyprotein (V-REL) from Galliformes.